Here is a 436-residue protein sequence, read N- to C-terminus: GTPase Der (436 aa).

2 EngA-type G domains span residues 4 to 165 and 172 to 347; these read NVIA…NFDS and FKLS…ENLE. Residues 10 to 17, 57 to 61, 119 to 122, 178 to 185, 225 to 229, and 290 to 293 each bind GTP; these read GKPNVGKS, DTGGI, NKLD, GQPNSGKS, DTAGI, and NKWD. Positions 348-432 constitute a KH-like domain; the sequence is REIKPSVLTN…PINIIFKNKS (85 aa).

Belongs to the TRAFAC class TrmE-Era-EngA-EngB-Septin-like GTPase superfamily. EngA (Der) GTPase family. In terms of assembly, associates with the 50S ribosomal subunit.

GTPase that plays an essential role in the late steps of ribosome biogenesis. The polypeptide is GTPase Der (Mycoplasmopsis agalactiae (strain NCTC 10123 / CIP 59.7 / PG2) (Mycoplasma agalactiae)).